The chain runs to 585 residues: Frizzled-5 (585 aa).

A signal peptide spans 1 to 26 (MARPDPSAPPSLLLLLLAQLVGRAAA). Over 27 to 238 (ASKAPVCQEI…PDERTFATFW (212 aa)) the chain is Extracellular. The FZ domain occupies 28–150 (SKAPVCQEIT…GDAEVLCMDY (123 aa)). Cystine bridges form between cysteine 33/cysteine 94, cysteine 41/cysteine 87, cysteine 78/cysteine 116, cysteine 105/cysteine 147, and cysteine 109/cysteine 133. Residue asparagine 47 is glycosylated (N-linked (GlcNAc...) asparagine). N-linked (GlcNAc...) asparagine glycosylation occurs at asparagine 151. The interval 156–182 (TTASPKSFPAKPTLPGPPGAPSSGGEC) is disordered. A helical transmembrane segment spans residues 239-259 (IGLWSVLCFISTSTTVATFLI). Topologically, residues 260–270 (DMERFRYPERP) are cytoplasmic. A helical membrane pass occupies residues 271–291 (IIFLSACYLCVSLGFLVRLVV). Residues 292 to 315 (GHASVACSREHSHIHYETTGPALC) are Extracellular-facing. Residues 316 to 336 (TVVFLLVYFFGMASSIWWVIL) form a helical membrane-spanning segment. Topologically, residues 337-358 (SLTWFLAAGMKWGNEAIAGYAQ) are cytoplasmic. The chain crosses the membrane as a helical span at residues 359–379 (YFHLAAWLIPSVKSITALALS). Topologically, residues 380–402 (SVDGDPVAGICYVGNQNLNSLRG) are extracellular. Residues 403–423 (FVLGPLVLYLLVGTLFLLAGF) traverse the membrane as a helical segment. The Cytoplasmic portion of the chain corresponds to 424-449 (VSLFRIRSVIKQGGTKTDKLEKLMIR). A helical membrane pass occupies residues 450 to 470 (IGIFTLLYTVPASIVVACYLY). Residues 471 to 500 (EQHYRESWEAALTCACPGPDAGQPRAKPEY) lie on the Extracellular side of the membrane. The chain crosses the membrane as a helical span at residues 501–521 (WVLMLKYFMCLVVGITSGVWI). At 522–585 (WSGKTLESWR…YHKQVSLSHV (64 aa)) the chain is on the cytoplasmic side. A PDZ-binding motif is present at residues 582 to 584 (LSH).

Belongs to the G-protein coupled receptor Fz/Smo family. In terms of assembly, binding of unsaturated fatty acid molecules (via FZ domain) promotes homodimerization (via FZ domain). Interacts with WNT2B. Interacts with WNT7A. Interacts with GOPC. In terms of processing, ubiquitinated by RNF43 and ZNRF3, leading to its degradation by the proteasome. In terms of tissue distribution, detected in hippocampus (at protein level). Expressed in eye, kidney, lung, chondrocytes, epithelial cells of the small intestine and gobelet cells of the colon.

Its subcellular location is the cell membrane. The protein localises to the golgi apparatus membrane. It is found in the synapse. The protein resides in the perikaryon. It localises to the cell projection. Its subcellular location is the dendrite. The protein localises to the axon. Its function is as follows. Receptor for Wnt proteins. Functions in the canonical Wnt/beta-catenin signaling pathway. In vitro activates WNT2, WNT10B, WNT5A, but not WNT2B or WNT4 signaling. In neurons, activation by WNT7A promotes formation of synapses. May be involved in transduction and intercellular transmission of polarity information during tissue morphogenesis and/or in differentiated tissues. Plays a role in yolk sac angiogenesis and in placental vascularization. Plays a role in ocular development. The chain is Frizzled-5 (Fzd5) from Mus musculus (Mouse).